A 1032-amino-acid chain; its full sequence is MSQQGYVATPPYSQPQPGIGLSPPHYGHYGDPSHTASPTGMMKPAGPLGATATRGMLPPGPPPPGPHQFGQNGAHATGHPPQRFPGPPPVNNVASSHAPYQPSAQSSYPGPISTSSVTQLGSQLSAMQINSYGSGMAPPSQGPPGPLSATSLQTPPRPPQPSILQPGSQVLPPPPTTLNGPGASPLPLPMYRPDGLSGPPPPNAQYQPPPLPGQTLGAGYPPQQANSGPQMAGAQLSYPGGFPGGPAQMAGPPQPQKKLDPDSIPSPIQVIENDRASRGGQVYATNTRGQIPPLVTTDCMIQDQGNASPRFIRCTTYCFPCTSDMAKQAQIPLAAVIKPFATIPSNESPLYLVNHGESGPVRCNRCKAYMCPFMQFIEGGRRYQCGFCNCVNDVPPFYFQHLDHIGRRLDHYEKPELSLGSYEYVATLDYCRKSKPPNPPAFIFMIDVSYSNIKNGLVKLICEELKTMLEKIPKEEQEETSAIRVGFITYNKVLHFFNVKSNLAQPQMMVVTDVGEVFVPLLDGFLVNYQESQSVIHNLLDQIPDMFADSNENETVFAPVIQAGMEALKAADCPGKLFIFHSSLPTAEAPGKLKNRDDKKLVNTDKEKILFQPQTNVYDSLAKDCVAHGCSVTLFLFPSQYVDVASLGLVPQLTGGTLYKYNNFQMHLDRQQFLNDLRNDIEKKIGFDAIMRVRTSTGFRATDFFGGILMNNTTDVEMAAIDCDKAVTVEFKHDDKLSEDSGALIQCAVLYTTISGQRRLRIHNLGLNCSSQLADLYKSCETDALINFFAKSAFKAVLHQPLKVIREILVNQTAHMLACYRKNCASPSAASQLILPDSMKVLPVYMNCLLKNCVLLSRPEISTDERAYQRQLVMTMGVADSQLFFYPQLLPIHTLDVKSTMLPAAVRCSESRLSEEGIFLLANGLHMFLWLGVSSPPELIQGIFNVPSFAHINTDMTLLPEVGNPYSQQLRMIMGIIQQKRPYSMKLTIVKQREQPEMVFRQFLVEDKGLYGGSSYVDFLCCVHKEICQLLN.

The disordered stretch occupies residues 1-260; sequence MSQQGYVATP…GPPQPQKKLD (260 aa). Residues 102–133 are compositionally biased toward polar residues; sequence PSAQSSYPGPISTSSVTQLGSQLSAMQINSYG. Pro residues predominate over residues 198 to 212; the sequence is GPPPPNAQYQPPPLP. S266 is subject to Phosphoserine. C363, C366, C385, and C388 together coordinate Zn(2+). The tract at residues 363–388 is zinc finger-like; that stretch reads CNRCKAYMCPFMQFIEGGRRYQCGFC. One copy of the Gelsolin-like repeat lies at 901 to 974; it reads MLPAAVRCSE…PYSQQLRMIM (74 aa).

The protein belongs to the SEC23/SEC24 family. SEC24 subfamily. In terms of assembly, COPII is composed of at least five proteins: the Sec23/24 complex, the Sec13/31 complex and Sar1. Interacts with TMED2 and TMED10. Interacts with CNIH4. Interacts with GOSR2 (via IxM motif) and STX5 (via IxM motif); recruits GOSR2 and STX5 into COPII-coated vesicles. Interacts with KCNA3; this interaction is reduced in the presence of KCNE4. In terms of tissue distribution, ubiquitously expressed, with higher amounts in placenta, pancreas, heart and liver.

It localises to the cytoplasmic vesicle. The protein localises to the COPII-coated vesicle membrane. The protein resides in the endoplasmic reticulum membrane. It is found in the cytoplasm. Its subcellular location is the cytosol. Its function is as follows. Component of the coat protein complex II (COPII) which promotes the formation of transport vesicles from the endoplasmic reticulum (ER). The coat has two main functions, the physical deformation of the endoplasmic reticulum membrane into vesicles and the selection of cargo molecules for their transport to the Golgi complex. Plays a central role in cargo selection within the COPII complex and together with SEC24C may have a different specificity compared to SEC24A and SEC24B. May more specifically package GPI-anchored proteins through the cargo receptor TMED10. May also be specific for IxM motif-containing cargos like the SNAREs GOSR2 and STX5. In Homo sapiens (Human), this protein is Protein transport protein Sec24D.